A 1370-amino-acid chain; its full sequence is Reverse gyrase 1 (1370 aa).

The RG N-terminal-type zinc-finger motif lies at A6–S47. Positions 16, 19, 34, and 37 each coordinate Zn(2+). Residues Q95 and A112–T119 each bind ATP. Residues A99 to R287 form the Helicase ATP-binding domain. Residues D220–D223 carry the DEAD box motif. The interval E643–G1370 is topoisomerase I. Residues T647 to V825 enclose the Toprim domain. Mg(2+) is bound at residue E653. The RG C-terminal-type zinc finger occupies I744–S772. Residues C747, C750, C761, and C764 each contribute to the Zn(2+) site. D794 is a Mg(2+) binding site. In terms of domain architecture, Topo IA-type catalytic spans D841–A1323. Catalysis depends on Y1028, which acts as the O-(5'-phospho-DNA)-tyrosine intermediate.

This sequence in the N-terminal section; belongs to the DEAD box helicase family. DDVD subfamily. The protein in the C-terminal section; belongs to the type IA topoisomerase family. In terms of assembly, monomer. Zn(2+) is required as a cofactor. The cofactor is Mg(2+).

It is found in the cytoplasm. The catalysed reaction is ATP + H2O = ADP + phosphate + H(+). In terms of biological role, modifies the topological state of DNA by introducing positive supercoils in an ATP-dependent process, increasing the linking number in steps of +1. Binds to single-stranded DNA, transiently cleaves and then rejoins the ends, introducing a positive supercoil in the process. The scissile phosphodiester is attacked by the catalytic tyrosine of the enzyme, resulting in the formation of a DNA-(5'-phosphotyrosyl)-enzyme intermediate. Probably involved in rewinding DNA strands in regions of the chromosome that have opened up to allow replication, transcription, DNA repair and/or for DNA protection. This is Reverse gyrase 1 from Aeropyrum pernix (strain ATCC 700893 / DSM 11879 / JCM 9820 / NBRC 100138 / K1).